A 459-amino-acid polypeptide reads, in one-letter code: ATP synthase subunit beta (459 aa).

Residue 149 to 156 participates in ATP binding; it reads GGAGVGKT.

It belongs to the ATPase alpha/beta chains family. As to quaternary structure, F-type ATPases have 2 components, CF(1) - the catalytic core - and CF(0) - the membrane proton channel. CF(1) has five subunits: alpha(3), beta(3), gamma(1), delta(1), epsilon(1). CF(0) has three main subunits: a(1), b(2) and c(9-12). The alpha and beta chains form an alternating ring which encloses part of the gamma chain. CF(1) is attached to CF(0) by a central stalk formed by the gamma and epsilon chains, while a peripheral stalk is formed by the delta and b chains.

It localises to the cell inner membrane. The catalysed reaction is ATP + H2O + 4 H(+)(in) = ADP + phosphate + 5 H(+)(out). In terms of biological role, produces ATP from ADP in the presence of a proton gradient across the membrane. The catalytic sites are hosted primarily by the beta subunits. This is ATP synthase subunit beta from Pseudomonas syringae pv. tomato (strain ATCC BAA-871 / DC3000).